The primary structure comprises 190 residues: Elongation factor P-like protein (190 aa).

This sequence belongs to the elongation factor P family.

The chain is Elongation factor P-like protein from Shigella boydii serotype 4 (strain Sb227).